We begin with the raw amino-acid sequence, 967 residues long: MNSFEKKILILKKDDKDSFIALVKQLSTKEKQILFDTIDSRIRKLQTIYLNKPFNLKFLQTFIKEDSDEDDDDEEDEEDEEDSDEEEDDDVVEDDNTKDIGKSRDSDKSIKGKEKGKEKEKEEIEIIEQRYETKVIPKKPIYKDQQQELLQQLQLQQLQQKPISPIKDNSGVSYNTSFSSLSSLSMSNSTSSSLLSTSLLSASLLSASSSGLSTSSLSSSINNSSNNNSNISSSPLSSSPLTLSSSSSSSSPLQRIQSIQNLIRSNSLRTSLSSSSSLLPNLIQLQQQQLPPPPPSQQQQQQQQQQQQQNNSMLQQSNNNNISPRTQLLNNTTTLLPNNGLEEIFNDSNKIGEGGQCSIYKYMGTAMKRFKPSLSSSLISKEFENEVLILERLNHPNIVKIITYSTIERIILLEFIDGNSLDKYPSQSLPLSPSSSLPNPLKVIQDFQQIVDAMIYLHNEIGIIHFDLKPSNILKNSKNNKLKLIDFGISKFLNNNNQNNNNNSLNMGSYRYSPPELLCNNNQNNNLINKSVDVFSFGIMLWECLNWTLPYESLSREQVKQIKTDMERESHLPLDHLPKGIQDLIRLCWKHDPSIRPSFIEIRSRLSEIILNNIPSLNGRQFWISSSKYLQQNDDSLINNNNNNNQNNNNQNNNNNNNNNNNNNNNNKDETTSIIIYESIPWLKFKTFLSNHLNIYRQSSTSNSNSSFNLNNNSSRNNQRQQQQQNNRNRSVYNNNYNNNNNNIINNNNNNINNNRNRNYNAYYEYIFDYIRYILKVIDEKRDEVSVIEFSRFCTFFSPLISSSLFRSIQIFCDIPGLYGYCLKKDLILSSSMITLMSKIGYLIFIDPNNINQLFLKMKAPTSSSSNKNNNNNNNDNNNPSNFIDFTIRVKIGNYNQRIFQCHGHTSSSLSGLIKELQPLIDNNNSGNSSGSSSSKKSNSGFLYQKTPISEIKDRHINGSYLNQNYK.

Disordered stretches follow at residues 65–122 (EDSD…KEKE), 215–251 (SSLSSSINNSSNNNSNISSSPLSSSPLTLSSSSSSSS), and 287–326 (QQQLPPPPPSQQQQQQQQQQQQQNNSMLQQSNNNNISPRT). The span at 66 to 94 (DSDEDDDDEEDEEDEEDSDEEEDDDVVED) shows a compositional bias: acidic residues. Basic and acidic residues predominate over residues 95-122 (DNTKDIGKSRDSDKSIKGKEKGKEKEKE). A compositionally biased stretch (low complexity) spans 297–326 (QQQQQQQQQQQQQNNSMLQQSNNNNISPRT). Residues 345–610 (FNDSNKIGEG…EIRSRLSEII (266 aa)) form the Protein kinase domain. Residues 351–359 (IGEGGQCSI) and K368 contribute to the ATP site. D467 (proton acceptor) is an active-site residue. Disordered regions lie at residues 634–667 (DDSLINNNNNNNQNNNNQNNNNNNNNNNNNNNNN), 700–752 (STSN…NNNI), and 862–882 (TSSSSNKNNNNNNNDNNNPSN). A compositionally biased stretch (low complexity) spans 639-666 (NNNNNNNQNNNNQNNNNNNNNNNNNNNN). Low complexity predominate over residues 863 to 882 (SSSSNKNNNNNNNDNNNPSN).

Belongs to the protein kinase superfamily. TKL Ser/Thr protein kinase family.

It carries out the reaction L-seryl-[protein] + ATP = O-phospho-L-seryl-[protein] + ADP + H(+). It catalyses the reaction L-threonyl-[protein] + ATP = O-phospho-L-threonyl-[protein] + ADP + H(+). This chain is Probable serine/threonine-protein kinase DDB_G0290621, found in Dictyostelium discoideum (Social amoeba).